A 105-amino-acid polypeptide reads, in one-letter code: Sec-independent protein translocase protein TatA (105 aa).

The chain crosses the membrane as a helical span at residues 1 to 21; that stretch reads MSLGPWEIGIIVLLIIVLFGA. Positions 41–50 are enriched in basic and acidic residues; it reads EVKEMNKDGD. Residues 41–105 are disordered; the sequence is EVKEMNKDGD…QNYEDPNRTS (65 aa). A compositionally biased stretch (low complexity) spans 52–92; the sequence is PEQQQQPQQQIAPNQIEAPQPNFEQHYQGQQVQQPQNPQTP. Residues 96-105 show a composition bias toward basic and acidic residues; it reads QNYEDPNRTS.

Belongs to the TatA/E family. As to quaternary structure, the Tat system comprises two distinct complexes: a TatABC complex, containing multiple copies of TatA, TatB and TatC subunits, and a separate TatA complex, containing only TatA subunits. Substrates initially bind to the TatABC complex, which probably triggers association of the separate TatA complex to form the active translocon.

It localises to the cell membrane. Part of the twin-arginine translocation (Tat) system that transports large folded proteins containing a characteristic twin-arginine motif in their signal peptide across membranes. TatA could form the protein-conducting channel of the Tat system. This is Sec-independent protein translocase protein TatA from Corynebacterium glutamicum (strain ATCC 13032 / DSM 20300 / JCM 1318 / BCRC 11384 / CCUG 27702 / LMG 3730 / NBRC 12168 / NCIMB 10025 / NRRL B-2784 / 534).